We begin with the raw amino-acid sequence, 316 residues long: tRNA dimethylallyltransferase (316 aa).

17–24 (GPTASGKT) is a binding site for ATP. 19–24 (TASGKT) serves as a coordination point for substrate. Interaction with substrate tRNA stretches follow at residues 42–45 (DSAL), 166–170 (QRLSR), and 247–252 (RCVGYR).

Belongs to the IPP transferase family. As to quaternary structure, monomer. It depends on Mg(2+) as a cofactor.

It carries out the reaction adenosine(37) in tRNA + dimethylallyl diphosphate = N(6)-dimethylallyladenosine(37) in tRNA + diphosphate. Functionally, catalyzes the transfer of a dimethylallyl group onto the adenine at position 37 in tRNAs that read codons beginning with uridine, leading to the formation of N6-(dimethylallyl)adenosine (i(6)A). This chain is tRNA dimethylallyltransferase, found in Salmonella newport (strain SL254).